Consider the following 530-residue polypeptide: NAD(+) kinase (530 aa).

Disordered regions lie at residues 1–27 (MKEN…HNNN), 57–99 (ISSE…KSSN), and 486–530 (SLEA…RFSV). Residues 13–25 (WVNEEDGRNDHHN) are compositionally biased toward basic and acidic residues. Over residues 59–75 (SESSSRRSSLLNKDSSL) the composition is skewed to low complexity. Over residues 88–99 (INGTRGSSKSSN) the composition is skewed to polar residues. Residues Ser-499 and Ser-503 each carry the phosphoserine modification. The segment covering 499–508 (SDDESDDESV) has biased composition (acidic residues).

The protein belongs to the NAD kinase family. In terms of assembly, homohexamer.

It catalyses the reaction NAD(+) + ATP = ADP + NADP(+) + H(+). In terms of biological role, specifically phosphorylates NAD in the presence of ATP, dATP, or CTP as phosphoryl donors. The chain is NAD(+) kinase (UTR1) from Saccharomyces cerevisiae (strain ATCC 204508 / S288c) (Baker's yeast).